Consider the following 193-residue polypeptide: ATP-dependent Clp protease proteolytic subunit 1 (193 aa).

The Nucleophile role is filled by serine 98. Histidine 123 is an active-site residue.

The protein belongs to the peptidase S14 family. As to quaternary structure, fourteen ClpP subunits assemble into 2 heptameric rings which stack back to back to give a disk-like structure with a central cavity, resembling the structure of eukaryotic proteasomes.

The protein resides in the cytoplasm. The enzyme catalyses Hydrolysis of proteins to small peptides in the presence of ATP and magnesium. alpha-casein is the usual test substrate. In the absence of ATP, only oligopeptides shorter than five residues are hydrolyzed (such as succinyl-Leu-Tyr-|-NHMec, and Leu-Tyr-Leu-|-Tyr-Trp, in which cleavage of the -Tyr-|-Leu- and -Tyr-|-Trp bonds also occurs).. In terms of biological role, cleaves peptides in various proteins in a process that requires ATP hydrolysis. Has a chymotrypsin-like activity. Plays a major role in the degradation of misfolded proteins. The protein is ATP-dependent Clp protease proteolytic subunit 1 of Bacillus cereus (strain ATCC 10987 / NRS 248).